Consider the following 588-residue polypeptide: Proline--tRNA ligase (588 aa).

It belongs to the class-II aminoacyl-tRNA synthetase family. ProS type 1 subfamily. In terms of assembly, homodimer.

The protein localises to the cytoplasm. It catalyses the reaction tRNA(Pro) + L-proline + ATP = L-prolyl-tRNA(Pro) + AMP + diphosphate. Its function is as follows. Catalyzes the attachment of proline to tRNA(Pro) in a two-step reaction: proline is first activated by ATP to form Pro-AMP and then transferred to the acceptor end of tRNA(Pro). As ProRS can inadvertently accommodate and process non-cognate amino acids such as alanine and cysteine, to avoid such errors it has two additional distinct editing activities against alanine. One activity is designated as 'pretransfer' editing and involves the tRNA(Pro)-independent hydrolysis of activated Ala-AMP. The other activity is designated 'posttransfer' editing and involves deacylation of mischarged Ala-tRNA(Pro). The misacylated Cys-tRNA(Pro) is not edited by ProRS. This is Proline--tRNA ligase from Corynebacterium glutamicum (strain R).